The primary structure comprises 388 residues: Protein phosphatase 2C 57 (388 aa).

The 290-residue stretch at 59-348 (RWGYTSVQGF…DNISIIIADL (290 aa)) folds into the PPM-type phosphatase domain. 4 residues coordinate Mn(2+): Asp-93, Gly-94, Asp-296, and Asp-339. A helical transmembrane segment spans residues 363-383 (VVVELVQAATTIGLVTVGIWM).

Belongs to the PP2C family. It depends on Mg(2+) as a cofactor. Mn(2+) serves as cofactor.

The protein localises to the membrane. The protein resides in the plastid. It localises to the chloroplast stroma. The catalysed reaction is O-phospho-L-seryl-[protein] + H2O = L-seryl-[protein] + phosphate. The enzyme catalyses O-phospho-L-threonyl-[protein] + H2O = L-threonyl-[protein] + phosphate. Its function is as follows. Protein phosphatase specifically required for efficient dephosphorylation of the light-harvesting complex II outer antennae (LCHII) and transition from state 2 to state 1. State transition plays a central role in response to environmental changes and allows to adjust to changing light conditions via the redistribution of light excitation energy between photosystem II (PSII) and photosystem I (PSI) in a short time by relocating LHCII proteins. Mainly responsible for the dephosphorylation of Lhcb1 and Lhcb2 but not of the photosystem II core proteins. In Arabidopsis thaliana (Mouse-ear cress), this protein is Protein phosphatase 2C 57.